A 284-amino-acid chain; its full sequence is MGESWAARGAEGAPARMPLVLTALWAAVVVLELAYVMVLGPGPPPLGPLARALQLALAAYQLLNLLGNVVLFLRSDPSIRGVMLAGRGLGQGWAYCYQCQSQVPPRSGHCSACRVCILRRDHHCRLLGCCVGFHNYRPFLCLLLHSAGVLLHISVLLGPALSALLQAHSALYTVALLLLPWLMLLTGKVSLAQFALAFVVDTCVAGALLCGAGLLFHGMLLLRGQTTWEWARGHHCYDLGTCHNLQAALGPRWALVWFWPFLASPLPGDGISFQTPGDVGLVTS.

At 1-18 (MGESWAARGAEGAPARMP) the chain is on the cytoplasmic side. A helical membrane pass occupies residues 19-39 (LVLTALWAAVVVLELAYVMVL). The Extracellular portion of the chain corresponds to 40–52 (GPGPPPLGPLARA). The chain crosses the membrane as a helical span at residues 53–73 (LQLALAAYQLLNLLGNVVLFL). The Cytoplasmic portion of the chain corresponds to 74–137 (RSDPSIRGVM…GCCVGFHNYR (64 aa)). A DHHC domain is found at 94–144 (AYCYQCQSQVPPRSGHCSACRVCILRRDHHCRLLGCCVGFHNYRPFLCLLL). The S-palmitoyl cysteine intermediate role is filled by Cys-124. A helical membrane pass occupies residues 138–158 (PFLCLLLHSAGVLLHISVLLG). Residues 159-166 (PALSALLQ) lie on the Extracellular side of the membrane. A helical transmembrane segment spans residues 167 to 187 (AHSALYTVALLLLPWLMLLTG). Residues 188–195 (KVSLAQFA) are Cytoplasmic-facing. A helical membrane pass occupies residues 196-216 (LAFVVDTCVAGALLCGAGLLF). The Extracellular portion of the chain corresponds to 217–284 (HGMLLLRGQT…TPGDVGLVTS (68 aa)).

The protein belongs to the DHHC palmitoyltransferase family.

It localises to the membrane. The enzyme catalyses L-cysteinyl-[protein] + hexadecanoyl-CoA = S-hexadecanoyl-L-cysteinyl-[protein] + CoA. Probable palmitoyltransferase that could catalyze the addition of palmitate onto various protein substrates. This chain is Probable palmitoyltransferase ZDHHC24, found in Mus musculus (Mouse).